Consider the following 111-residue polypeptide: Colipase (111 aa).

The signal sequence occupies residues 1–16 (MKVLVLLLVTLAVVYA). Positions 17–21 (APDPR) are cleaved as a propeptide — enterostatin, activation peptide. 5 disulfides stabilise this stretch: Cys-33–Cys-44, Cys-39–Cys-55, Cys-43–Cys-77, Cys-65–Cys-85, and Cys-79–Cys-103.

Belongs to the colipase family. In terms of assembly, forms a 1:1 stoichiometric complex with pancreatic lipase. As to expression, expressed by the pancreas.

The protein localises to the secreted. Functionally, colipase is a cofactor of pancreatic lipase. It allows the lipase to anchor itself to the lipid-water interface. Without colipase the enzyme is washed off by bile salts, which have an inhibitory effect on the lipase. Enterostatin has a biological activity as a satiety signal. This chain is Colipase (CLPS), found in Ictidomys tridecemlineatus (Thirteen-lined ground squirrel).